Consider the following 298-residue polypeptide: Tyrosine recombinase XerC (298 aa).

The Core-binding (CB) domain maps to Thr2–Val88. The Tyr recombinase domain maps to His109–Asp288. Catalysis depends on residues Arg148, Lys172, His240, Arg243, and His266. Residue Tyr275 is the O-(3'-phospho-DNA)-tyrosine intermediate of the active site.

Belongs to the 'phage' integrase family. XerC subfamily. In terms of assembly, forms a cyclic heterotetrameric complex composed of two molecules of XerC and two molecules of XerD, in which XerC interacts with XerD via its C-terminal region, XerD interacts with XerC via its C-terminal region and so on.

It is found in the cytoplasm. Its activity is regulated as follows. FtsK may regulate the catalytic switch between XerC and XerD in the heterotetrameric complex during the two steps of the recombination process. Functionally, site-specific tyrosine recombinase, which acts by catalyzing the cutting and rejoining of the recombining DNA molecules. Binds cooperatively to specific DNA consensus sequences that are separated from XerD binding sites by a short central region, forming the heterotetrameric XerC-XerD complex that recombines DNA substrates. The complex is essential to convert dimers of the bacterial chromosome into monomers to permit their segregation at cell division. It also contributes to the segregational stability of plasmids. In the complex XerC specifically exchanges the top DNA strands. This is Tyrosine recombinase XerC from Escherichia coli O45:K1 (strain S88 / ExPEC).